The chain runs to 359 residues: Agropine synthesis conjugase (359 aa).

An SIS domain is found at 28 to 171 (TVAKFGRATA…IGGILNEREN (144 aa)).

This is Agropine synthesis conjugase (mas2) from Rhizobium rhizogenes (Agrobacterium rhizogenes).